The chain runs to 163 residues: Small ribosomal subunit protein uS5 (163 aa).

The S5 DRBM domain occupies 8-71; that stretch reads LIEKIVYLNR…EKARKEMISV (64 aa).

The protein belongs to the universal ribosomal protein uS5 family. Part of the 30S ribosomal subunit. Contacts proteins S4 and S8.

Its function is as follows. With S4 and S12 plays an important role in translational accuracy. Located at the back of the 30S subunit body where it stabilizes the conformation of the head with respect to the body. The protein is Small ribosomal subunit protein uS5 of Maridesulfovibrio salexigens (strain ATCC 14822 / DSM 2638 / NCIMB 8403 / VKM B-1763) (Desulfovibrio salexigens).